The chain runs to 675 residues: Potassium-transporting ATPase ATP-binding subunit 2 (675 aa).

4 helical membrane-spanning segments follow: residues 34–54, 65–85, 216–236, and 245–265; these read IMFVVEVGMVLTLILICFPDI, LITIFIILLITILFANFSEAF, IALFTLLTTLTIIFLVVIVTL, and LILPIAMLIALTVCLIPTTIG. The 4-aspartylphosphate intermediate role is filled by Asp304. Residues Asp341, Glu345, 372–379, and Lys390 each bind ATP; that span reads FTAETRMS. Mg(2+) contacts are provided by Asp513 and Asp517. 3 consecutive transmembrane segments (helical) span residues 569-591, 611-631, and 644-664; these read ALTTFSLANDVAKYFAILPALMM, AIISALIFNALIIVALIPIAM, and IFINNMLIYGLGGLIVPFLGI.

It belongs to the cation transport ATPase (P-type) (TC 3.A.3) family. Type IA subfamily. In terms of assembly, the system is composed of three essential subunits: KdpA, KdpB and KdpC.

The protein localises to the cell membrane. It carries out the reaction K(+)(out) + ATP + H2O = K(+)(in) + ADP + phosphate + H(+). Functionally, part of the high-affinity ATP-driven potassium transport (or Kdp) system, which catalyzes the hydrolysis of ATP coupled with the electrogenic transport of potassium into the cytoplasm. This subunit is responsible for energy coupling to the transport system and for the release of the potassium ions to the cytoplasm. This chain is Potassium-transporting ATPase ATP-binding subunit 2, found in Staphylococcus aureus (strain Mu50 / ATCC 700699).